A 191-amino-acid chain; its full sequence is CASP-like protein 1D1 (191 aa).

Topologically, residues 1-22 are cytoplasmic; it reads MTSTSKDTPESGYAVPPPNLFG. Residues 23-43 form a helical membrane-spanning segment; the sequence is VDFGLRLLLLASAVSALVVLV. Topologically, residues 44–73 are extracellular; it reads TSKQTESIPTSLPPPFPAFISRDAKFQHSP. Residues 74-94 traverse the membrane as a helical segment; sequence AFIYLLVALSVTCFYSIITMV. The Cytoplasmic portion of the chain corresponds to 95 to 118; sequence ASFAAITSPSSSPRMLFHLVLSDA. The chain crosses the membrane as a helical span at residues 119–139; it reads VMAGVMASAAGTAGSVAYLGL. The Extracellular segment spans residues 140–160; it reads KGNSHVNWNKVCNVYDKFCRH. Residues 161–181 form a helical membrane-spanning segment; it reads VGSSAAVSLVASVLLVSLVVL. At 182-191 the chain is on the cytoplasmic side; that stretch reads SSYSLYRRCR.

It belongs to the Casparian strip membrane proteins (CASP) family. In terms of assembly, homodimer and heterodimers.

Its subcellular location is the cell membrane. The sequence is that of CASP-like protein 1D1 from Musa acuminata (Banana).